The following is a 293-amino-acid chain: Protein BOBBER 2 (293 aa).

The residue at position 2 (A2) is an N-acetylalanine. Residues 50 to 80 adopt a coiled-coil conformation; it reads EKEIVAAVMAAKQRLREAEKKKLEKESVKSM. 2 stretches are compositionally biased toward basic and acidic residues: residues 67–102 and 110–120; these read AEKK…KEES and EIEKPKEEKES. A disordered region spans residues 67–125; sequence AEKKKLEKESVKSMEVEKPKKDSLKPTELEKPKEESLMATDPMEIEKPKEEKESGPIVP. The 90-residue stretch at 131–220 folds into the CS domain; sequence LDFEKYSWGQ…DQMEWWKYCV (90 aa).

The protein resides in the cytoplasm. It is found in the cytoplasmic granule. In terms of biological role, small heat shock protein required for the establishment of auxin gradients and for patterning of the apical domain of the embryo. Involved in the specification of the cotyledon primordia. Also required for normal inflorescence and floral meristem function, normal developmental patterning and thermotolerance. Acts as a molecular chaperone. The chain is Protein BOBBER 2 (BOB2) from Arabidopsis thaliana (Mouse-ear cress).